A 164-amino-acid polypeptide reads, in one-letter code: ATP synthase subunit b (164 aa).

The helical transmembrane segment at 6–26 (GELVGNFILVTGSVIVLLLLI) threads the bilayer.

Belongs to the ATPase B chain family. In terms of assembly, F-type ATPases have 2 components, F(1) - the catalytic core - and F(0) - the membrane proton channel. F(1) has five subunits: alpha(3), beta(3), gamma(1), delta(1), epsilon(1). F(0) has three main subunits: a(1), b(2) and c(10-14). The alpha and beta chains form an alternating ring which encloses part of the gamma chain. F(1) is attached to F(0) by a central stalk formed by the gamma and epsilon chains, while a peripheral stalk is formed by the delta and b chains.

It is found in the cell membrane. Functionally, f(1)F(0) ATP synthase produces ATP from ADP in the presence of a proton or sodium gradient. F-type ATPases consist of two structural domains, F(1) containing the extramembraneous catalytic core and F(0) containing the membrane proton channel, linked together by a central stalk and a peripheral stalk. During catalysis, ATP synthesis in the catalytic domain of F(1) is coupled via a rotary mechanism of the central stalk subunits to proton translocation. Component of the F(0) channel, it forms part of the peripheral stalk, linking F(1) to F(0). The protein is ATP synthase subunit b of Streptococcus pyogenes serotype M1.